A 210-amino-acid polypeptide reads, in one-letter code: MLKMNVKKALVILVALALVAAGIYLLKRPEEELRVNTDLENAKLSDFWSAVVKAANVQNETANLEWLRLKVEDGKIHLLHLEFNGNGVDGRKRVYFVDVDSTGRVRINSGTVEQSISTRHPTKVFRELDALGLYSIGGSYTLSVDFEWGDIGFDSTVTPLYLLENGELKPLREVVFHTDWPVCEIAVCKNGCEVWFIREDLSRASEVVFG.

The signal sequence occupies residues 1–21; the sequence is MLKMNVKKALVILVALALVAA.

This is an uncharacterized protein from Archaeoglobus fulgidus (strain ATCC 49558 / DSM 4304 / JCM 9628 / NBRC 100126 / VC-16).